Here is a 96-residue protein sequence, read N- to C-terminus: ESAT-6-like protein EsxR (96 aa).

This sequence belongs to the WXG100 family. ESAT-6 subfamily.

It is found in the secreted. The polypeptide is ESAT-6-like protein EsxR (Mycobacterium bovis (strain ATCC BAA-935 / AF2122/97)).